The following is a 313-amino-acid chain: 4-hydroxy-3-methylbut-2-enyl diphosphate reductase (313 aa).

C12 serves as a coordination point for [4Fe-4S] cluster. H41 and H74 together coordinate (2E)-4-hydroxy-3-methylbut-2-enyl diphosphate. H41 and H74 together coordinate dimethylallyl diphosphate. 2 residues coordinate isopentenyl diphosphate: H41 and H74. A [4Fe-4S] cluster-binding site is contributed by C96. Residue H124 coordinates (2E)-4-hydroxy-3-methylbut-2-enyl diphosphate. H124 is a binding site for dimethylallyl diphosphate. Isopentenyl diphosphate is bound at residue H124. The active-site Proton donor is the E126. T164 contributes to the (2E)-4-hydroxy-3-methylbut-2-enyl diphosphate binding site. Residue C194 coordinates [4Fe-4S] cluster. Residues S222, S223, N224, and S266 each coordinate (2E)-4-hydroxy-3-methylbut-2-enyl diphosphate. Dimethylallyl diphosphate contacts are provided by S222, S223, N224, and S266. Residues S222, S223, N224, and S266 each coordinate isopentenyl diphosphate.

It belongs to the IspH family. [4Fe-4S] cluster serves as cofactor.

It carries out the reaction isopentenyl diphosphate + 2 oxidized [2Fe-2S]-[ferredoxin] + H2O = (2E)-4-hydroxy-3-methylbut-2-enyl diphosphate + 2 reduced [2Fe-2S]-[ferredoxin] + 2 H(+). The enzyme catalyses dimethylallyl diphosphate + 2 oxidized [2Fe-2S]-[ferredoxin] + H2O = (2E)-4-hydroxy-3-methylbut-2-enyl diphosphate + 2 reduced [2Fe-2S]-[ferredoxin] + 2 H(+). The protein operates within isoprenoid biosynthesis; dimethylallyl diphosphate biosynthesis; dimethylallyl diphosphate from (2E)-4-hydroxy-3-methylbutenyl diphosphate: step 1/1. It functions in the pathway isoprenoid biosynthesis; isopentenyl diphosphate biosynthesis via DXP pathway; isopentenyl diphosphate from 1-deoxy-D-xylulose 5-phosphate: step 6/6. Its function is as follows. Catalyzes the conversion of 1-hydroxy-2-methyl-2-(E)-butenyl 4-diphosphate (HMBPP) into a mixture of isopentenyl diphosphate (IPP) and dimethylallyl diphosphate (DMAPP). Acts in the terminal step of the DOXP/MEP pathway for isoprenoid precursor biosynthesis. This chain is 4-hydroxy-3-methylbut-2-enyl diphosphate reductase, found in Protochlamydia amoebophila (strain UWE25).